The chain runs to 229 residues: Molybdenum transport system permease protein ModB (229 aa).

Residues 1-16 are Periplasmic-facing; that stretch reads MILTDPEWQAVLLSLK. Positions 11-219 constitute an ABC transmembrane type-1 domain; the sequence is VLLSLKVSSL…MISLLISEWL (209 aa). The helical transmembrane segment at 17-37 threads the bilayer; that stretch reads VSSLAVLFSLPFGIFFAWLLV. The Cytoplasmic segment spans residues 38–49; it reads RCTFPGKALLDS. A helical transmembrane segment spans residues 50 to 70; that stretch reads VLHLPLVLPPVVVGYLLLVSM. Residues 71 to 83 lie on the Periplasmic side of the membrane; it reads GRRGFIGERLYDW. Residues 84–104 traverse the membrane as a helical segment; sequence FGITFAFSWRGAVLAAAVMSF. At 105–136 the chain is on the cytoplasmic side; sequence PLMVRAIRLALEGVDVKLEQAARTLGAGRWRV. A helical transmembrane segment spans residues 137 to 157; the sequence is FFTITLPLTLPGIIVGTVLAF. The Periplasmic portion of the chain corresponds to 158–201; sequence ARSLGEFGATITFVSNIPGETRTIPSAMYTLIQTPGGESGAARL. The chain crosses the membrane as a helical span at residues 202-222; sequence CIISIALAMISLLISEWLARI. The Cytoplasmic segment spans residues 223-229; that stretch reads SRERAGR.

It belongs to the binding-protein-dependent transport system permease family. CysTW subfamily.

It localises to the cell inner membrane. Functionally, part of the binding-protein-dependent transport system for molybdenum; probably responsible for the translocation of the substrate across the membrane. This chain is Molybdenum transport system permease protein ModB (modB), found in Escherichia coli O157:H7.